Here is a 716-residue protein sequence, read N- to C-terminus: Protein C-mannosyl-transferase DPY19L3 (716 aa).

Residues 1–43 (MMSIRQRREIRATEVSEDFPAQEENVKLENKLPSGCTSRRLWK) lie on the Cytoplasmic side of the membrane. The chain crosses the membrane as a helical span at residues 44–64 (ILSLTIGGTIALCIGLLTSVY). Topologically, residues 65-154 (LATLHENDLW…RVLPIQKYLE (90 aa)) are lumenal. N-linked (GlcNAc...) asparagine glycosylation is present at Asn118. The helical transmembrane segment at 155-182 (PVYFYIYTLFGLQAIYVTALYITSWLLS) threads the bilayer. Residues 183–184 (GT) are Cytoplasmic-facing. The segment at residues 185–197 (WLSGLLAAFWYVT) is an intramembrane region (name=3). The Cytoplasmic portion of the chain corresponds to 198–215 (NRIDTTRVEFTIPLRENW). An intramembrane region (name=4) is located at residues 216–230 (ALPFFAIQIAAITYF). Topologically, residues 231 to 239 (LRPNLQPLS) are cytoplasmic. Residues 240-256 (ERLTLLAIFISTFLFSL) traverse the membrane as a helical segment. Residues 257-262 (TWQFNQ) are Lumenal-facing. The helical transmembrane segment at 263 to 279 (FMMLMQALVLFTLDSLD) threads the bilayer. The Cytoplasmic segment spans residues 280 to 289 (MLPAVKATWL). The chain crosses the membrane as a helical span at residues 290-306 (YGIQITSLLLVCILQFF). Residues 307 to 308 (NS) are Lumenal-facing. Residues 309-323 (MILGSLLISFNLSVF) traverse the membrane as a helical segment. Topologically, residues 324-338 (IARKLQKNLKTGSFL) are cytoplasmic. A helical transmembrane segment spans residues 339–359 (NRLGKLLLHLFMVLCLTLFLN). The Lumenal segment spans residues 360-414 (NIIKKILNLKSDEHIFKFLKAKFGLGATRDFDANLYLCEEAFGLLPFNTFGRLSD). The helical transmembrane segment at 415–437 (TLLFYAYIFVLSITVIVAFVVAF) threads the bilayer. Residues 438–465 (HNLSDSTNQQSVGKMEKGTVDLKPETAY) are Cytoplasmic-facing. Residues 466 to 485 (NLIHTILFGFLALSTMRMKY) traverse the membrane as a helical segment. Over 486–487 (LW) the chain is Lumenal. A helical transmembrane segment spans residues 488–499 (TSHMCVFASFGL). The Cytoplasmic segment spans residues 500–522 (CSPEIWELLLKSVHLYNPKRICI). The chain crosses the membrane as a helical span at residues 523–539 (MRYSVPILILLYLCYKF). Residues 540 to 716 (WPGMMDELSE…FHVYKLSRNK (177 aa)) are Lumenal-facing. Residue Asn704 is glycosylated (N-linked (GlcNAc...) asparagine).

It belongs to the dpy-19 family. As to expression, widely expressed.

The protein resides in the endoplasmic reticulum membrane. It carries out the reaction L-tryptophyl-[protein] + a di-trans,poly-cis-dolichyl beta-D-mannosyl phosphate = C-alpha-D-mannosyl-L-tryptophyl-[protein] + a di-trans,poly-cis-dolichyl phosphate + H(+). The protein operates within protein modification; protein glycosylation. In terms of biological role, C-mannosyltransferase that mediates C-mannosylation of tryptophan residues on target proteins. The reaction occurs on the luminal side of the endoplasmic reticulum and involves the transfer of a mannose unit from a dolichylphosphate mannose (Dol-P-Man) donor to an acceptor protein containing a WxxW or WxxC consensus sequence. C-mannosylates RSPO1, a Wnt signaling regulator, preferentially at the first Trp residue in the sequence WxxW. C-mannosylates the netrin receptor UNC5A, preferentially at the third tryptophan of WxxWxxWxxC sequence. Functionally, has no C-mannosyltransferase activity. This chain is Protein C-mannosyl-transferase DPY19L3 (DPY19L3), found in Homo sapiens (Human).